Reading from the N-terminus, the 314-residue chain is MTREVFQHSSVMPEEVLECLRPQPGEVFVDGTVGGGGHARLILEATAPDGLLVGLDRDREALEEAGRQLASFGERVLLRHGNFADATRILAELDIATVDGILLDLGVSSFQLDTARRGFSFQSDAPLDMRMDTSAGMTAADVVNALSPEELARIFREYGEERYARRIARRIEKVRADEPLMTTRQLAELVRDAVPGGHVPSRIHPATRVFQALRIHVNAELDSLREGLRRSLALLKPGGRMAVISFHSLEDRIVKQFFRSEVQTCICPPGLPICACNRKPGVALLTRKGLKASESEIAANPRARSAVLRAIRRL.

Residues 36 to 38 (GGH), Asp56, Phe83, Asp104, and Gln111 contribute to the S-adenosyl-L-methionine site.

The protein belongs to the methyltransferase superfamily. RsmH family.

It localises to the cytoplasm. It catalyses the reaction cytidine(1402) in 16S rRNA + S-adenosyl-L-methionine = N(4)-methylcytidine(1402) in 16S rRNA + S-adenosyl-L-homocysteine + H(+). Specifically methylates the N4 position of cytidine in position 1402 (C1402) of 16S rRNA. In Syntrophotalea carbinolica (strain DSM 2380 / NBRC 103641 / GraBd1) (Pelobacter carbinolicus), this protein is Ribosomal RNA small subunit methyltransferase H.